Consider the following 309-residue polypeptide: Formamidopyrimidine-DNA glycosylase (309 aa).

Pro2 acts as the Schiff-base intermediate with DNA in catalysis. Glu3 functions as the Proton donor in the catalytic mechanism. Catalysis depends on Lys56, which acts as the Proton donor; for beta-elimination activity. His106 and Arg129 together coordinate DNA. The FPG-type zinc-finger motif lies at 271–305 (NVYGRQGNACPHCESTLENIKLNGRASVYCPLCQP). The Proton donor; for delta-elimination activity role is filled by Arg295.

Belongs to the FPG family. As to quaternary structure, monomer. Zn(2+) is required as a cofactor.

The catalysed reaction is Hydrolysis of DNA containing ring-opened 7-methylguanine residues, releasing 2,6-diamino-4-hydroxy-5-(N-methyl)formamidopyrimidine.. It carries out the reaction 2'-deoxyribonucleotide-(2'-deoxyribose 5'-phosphate)-2'-deoxyribonucleotide-DNA = a 3'-end 2'-deoxyribonucleotide-(2,3-dehydro-2,3-deoxyribose 5'-phosphate)-DNA + a 5'-end 5'-phospho-2'-deoxyribonucleoside-DNA + H(+). Involved in base excision repair of DNA damaged by oxidation or by mutagenic agents. Acts as a DNA glycosylase that recognizes and removes damaged bases. Has a preference for oxidized purines, such as 7,8-dihydro-8-oxoguanine (8-oxoG). Has AP (apurinic/apyrimidinic) lyase activity and introduces nicks in the DNA strand. Cleaves the DNA backbone by beta-delta elimination to generate a single-strand break at the site of the removed base with both 3'- and 5'-phosphates. The sequence is that of Formamidopyrimidine-DNA glycosylase from Psychrobacter arcticus (strain DSM 17307 / VKM B-2377 / 273-4).